The following is a 93-amino-acid chain: WAP four-disulfide core domain protein 13 (93 aa).

The N-terminal stretch at 1-22 (MKPVLPLQFLVVFCLALQLVPG) is a signal peptide. The region spanning 24 to 73 (PKQRVLKYILEPPPCISAPENCTHLCTMQEDCEKGFQCCSSFCGIVCSSE) is the WAP; atypical domain. 3 cysteine pairs are disulfide-bonded: C45/C66, C49/C61, and C55/C70.

It localises to the secreted. Putative acid-stable proteinase inhibitor. The protein is WAP four-disulfide core domain protein 13 (WFDC13) of Homo sapiens (Human).